Consider the following 296-residue polypeptide: Ribosomal protein L11 methyltransferase (296 aa).

4 residues coordinate S-adenosyl-L-methionine: threonine 139, glycine 163, aspartate 185, and asparagine 232.

It belongs to the methyltransferase superfamily. PrmA family.

It is found in the cytoplasm. The catalysed reaction is L-lysyl-[protein] + 3 S-adenosyl-L-methionine = N(6),N(6),N(6)-trimethyl-L-lysyl-[protein] + 3 S-adenosyl-L-homocysteine + 3 H(+). Functionally, methylates ribosomal protein L11. The protein is Ribosomal protein L11 methyltransferase of Picosynechococcus sp. (strain ATCC 27264 / PCC 7002 / PR-6) (Agmenellum quadruplicatum).